Here is a 357-residue protein sequence, read N- to C-terminus: Tetraacyldisaccharide 4'-kinase (357 aa).

67–74 (SVGGTGKT) is an ATP binding site.

It belongs to the LpxK family.

It catalyses the reaction a lipid A disaccharide + ATP = a lipid IVA + ADP + H(+). Its pathway is glycolipid biosynthesis; lipid IV(A) biosynthesis; lipid IV(A) from (3R)-3-hydroxytetradecanoyl-[acyl-carrier-protein] and UDP-N-acetyl-alpha-D-glucosamine: step 6/6. Functionally, transfers the gamma-phosphate of ATP to the 4'-position of a tetraacyldisaccharide 1-phosphate intermediate (termed DS-1-P) to form tetraacyldisaccharide 1,4'-bis-phosphate (lipid IVA). In Syntrophotalea carbinolica (strain DSM 2380 / NBRC 103641 / GraBd1) (Pelobacter carbinolicus), this protein is Tetraacyldisaccharide 4'-kinase.